The chain runs to 416 residues: Serine hydroxymethyltransferase (416 aa).

(6S)-5,6,7,8-tetrahydrofolate-binding positions include Leu-119 and 123–125; that span reads GHL. Lys-228 is modified (N6-(pyridoxal phosphate)lysine). Glu-243 provides a ligand contact to (6S)-5,6,7,8-tetrahydrofolate.

It belongs to the SHMT family. As to quaternary structure, homodimer. Pyridoxal 5'-phosphate is required as a cofactor.

Its subcellular location is the cytoplasm. It catalyses the reaction (6R)-5,10-methylene-5,6,7,8-tetrahydrofolate + glycine + H2O = (6S)-5,6,7,8-tetrahydrofolate + L-serine. Its pathway is one-carbon metabolism; tetrahydrofolate interconversion. The protein operates within amino-acid biosynthesis; glycine biosynthesis; glycine from L-serine: step 1/1. Functionally, catalyzes the reversible interconversion of serine and glycine with tetrahydrofolate (THF) serving as the one-carbon carrier. This reaction serves as the major source of one-carbon groups required for the biosynthesis of purines, thymidylate, methionine, and other important biomolecules. Also exhibits THF-independent aldolase activity toward beta-hydroxyamino acids, producing glycine and aldehydes, via a retro-aldol mechanism. This chain is Serine hydroxymethyltransferase, found in Desulforapulum autotrophicum (strain ATCC 43914 / DSM 3382 / VKM B-1955 / HRM2) (Desulfobacterium autotrophicum).